The following is a 213-amino-acid chain: Reticulon-3 (213 aa).

Residues 1-16 (MADTSGPQSSHISSSA) show a composition bias toward polar residues. The tract at residues 1–20 (MADTSGPQSSHISSSAGEKG) is disordered. In terms of domain architecture, Reticulon spans 25 to 213 (VQDLLYWRDV…LPGALKKKSE (189 aa)). A run of 2 helical transmembrane segments spans residues 45 to 65 (MVLLLSLAAFSIISVISYLVL) and 154 to 174 (VFNGITLLILGVLLAFTAPIV).

In terms of assembly, homodimer.

The protein resides in the endoplasmic reticulum membrane. Its subcellular location is the golgi apparatus membrane. Its function is as follows. May be involved in membrane trafficking in the early secretory pathway. The protein is Reticulon-3 (rtn3) of Xenopus tropicalis (Western clawed frog).